A 103-amino-acid polypeptide reads, in one-letter code: MQKQKIRIRLKAFDYKLIDQSALEIVDTAKRTGAIVKGPVPLPTRMQRFDILRSPHVNKSSRDQFEIRTHQRLMDIVDPTDKTVDALMKLDLPAGVDVEIKLQ.

Belongs to the universal ribosomal protein uS10 family. As to quaternary structure, part of the 30S ribosomal subunit.

In terms of biological role, involved in the binding of tRNA to the ribosomes. This is Small ribosomal subunit protein uS10 from Methylibium petroleiphilum (strain ATCC BAA-1232 / LMG 22953 / PM1).